A 148-amino-acid chain; its full sequence is Putative FAD-linked sulfhydryl oxidase 096R (148 aa).

The 103-residue stretch at 1–103 (MSIDPKLWGN…LAAKTVFQRY (103 aa)) folds into the ERV/ALR sulfhydryl oxidase domain. Cys-48 and Cys-51 are oxidised to a cystine. The chain crosses the membrane as a helical span at residues 122–142 (WSPWLTTALAVILVVVVAGIG).

It belongs to the IIV-6 347L family. FAD serves as cofactor.

The protein resides in the membrane. It carries out the reaction 2 R'C(R)SH + O2 = R'C(R)S-S(R)CR' + H2O2. In terms of biological role, FAD-dependent sulfhydryl oxidase that catalyzes disulfide bond formation. In Aedes vexans (Inland floodwater mosquito), this protein is Putative FAD-linked sulfhydryl oxidase 096R.